We begin with the raw amino-acid sequence, 89 residues long: Large ribosomal subunit protein bL27 (89 aa).

The segment at 1-26 (MAHKKAGGSSRNGRDSAGQRRGVKRF) is disordered.

Belongs to the bacterial ribosomal protein bL27 family.

This Nitratidesulfovibrio vulgaris (strain DSM 19637 / Miyazaki F) (Desulfovibrio vulgaris) protein is Large ribosomal subunit protein bL27.